A 375-amino-acid polypeptide reads, in one-letter code: Guanine nucleotide-binding protein subunit beta (375 aa).

WD repeat units lie at residues 63 to 93, 105 to 135, 154 to 185, 202 to 233, 246 to 276, 293 to 323, and 339 to 369; these read GHTG…IVWN, LPCA…SIYN, GHKG…VLWD, GHTA…RLWD, GHEG…RLFD, GDIP…YVWD, and SHEG…KIWA.

The protein belongs to the WD repeat G protein beta family. In terms of assembly, g proteins are composed of 3 units, alpha, beta and gamma.

In terms of biological role, guanine nucleotide-binding proteins (G proteins) are involved as a modulator or transducer in various transmembrane signaling systems. The beta and gamma chains are required for the GTPase activity, for replacement of GDP by GTP, and for G protein-effector interaction. The chain is Guanine nucleotide-binding protein subunit beta from Nicotiana tabacum (Common tobacco).